Reading from the N-terminus, the 430-residue chain is Glutamate-1-semialdehyde 2,1-aminomutase (430 aa).

The residue at position 265 (lysine 265) is an N6-(pyridoxal phosphate)lysine.

This sequence belongs to the class-III pyridoxal-phosphate-dependent aminotransferase family. HemL subfamily. As to quaternary structure, homodimer. It depends on pyridoxal 5'-phosphate as a cofactor.

The protein resides in the cytoplasm. The catalysed reaction is (S)-4-amino-5-oxopentanoate = 5-aminolevulinate. It participates in porphyrin-containing compound metabolism; protoporphyrin-IX biosynthesis; 5-aminolevulinate from L-glutamyl-tRNA(Glu): step 2/2. The sequence is that of Glutamate-1-semialdehyde 2,1-aminomutase from Shewanella baltica (strain OS195).